The primary structure comprises 287 residues: U-megalopygitoxin(8)-Mo12 (287 aa).

Residues 1 to 17 (MNLQYLILSLLSTTVYG) form the signal peptide. Histidine amide is present on H284.

It belongs to the megalysin family. Contains 2 disulfide bonds. In terms of tissue distribution, expressed by the venom apparatus.

It localises to the secreted. Its subcellular location is the target cell membrane. In terms of biological role, may function as a large pore-forming protein. This is U-megalopygitoxin(8)-Mo12 from Megalopyge opercularis (Southern flannel moth).